A 290-amino-acid chain; its full sequence is Acetyl-coenzyme A carboxylase carboxyl transferase subunit beta (290 aa).

The 264-residue stretch at 27–290 (LWVKCPSCEA…LQRQPADALA (264 aa)) folds into the CoA carboxyltransferase N-terminal domain. Residues Cys-31, Cys-34, Cys-50, and Cys-53 each contribute to the Zn(2+) site. The C4-type zinc-finger motif lies at 31 to 53 (CPSCEAVLYRNDVDANLHVCPKC).

Belongs to the AccD/PCCB family. In terms of assembly, acetyl-CoA carboxylase is a heterohexamer composed of biotin carboxyl carrier protein (AccB), biotin carboxylase (AccC) and two subunits each of ACCase subunit alpha (AccA) and ACCase subunit beta (AccD). Zn(2+) is required as a cofactor.

The protein localises to the cytoplasm. It carries out the reaction N(6)-carboxybiotinyl-L-lysyl-[protein] + acetyl-CoA = N(6)-biotinyl-L-lysyl-[protein] + malonyl-CoA. It participates in lipid metabolism; malonyl-CoA biosynthesis; malonyl-CoA from acetyl-CoA: step 1/1. Its function is as follows. Component of the acetyl coenzyme A carboxylase (ACC) complex. Biotin carboxylase (BC) catalyzes the carboxylation of biotin on its carrier protein (BCCP) and then the CO(2) group is transferred by the transcarboxylase to acetyl-CoA to form malonyl-CoA. The protein is Acetyl-coenzyme A carboxylase carboxyl transferase subunit beta of Burkholderia cenocepacia (strain ATCC BAA-245 / DSM 16553 / LMG 16656 / NCTC 13227 / J2315 / CF5610) (Burkholderia cepacia (strain J2315)).